Consider the following 124-residue polypeptide: Ribonuclease P protein subunit p14 (124 aa).

This sequence belongs to the eukaryotic/archaeal RNase P protein component 2 family. As to quaternary structure, RNase P consists of a catalytic RNA moiety and about 10 protein subunits; POP1, POP4, POP5, POP7, RPP14, RPP21, RPP25, RPP30, RPP38 and RPP40. Within the RNase P complex, POP1, POP7 and RPP25 form the 'finger' subcomplex, POP5, RPP14, RPP40 and homodimeric RPP30 form the 'palm' subcomplex, and RPP21, POP4 and RPP38 form the 'wrist' subcomplex. All subunits of the RNase P complex interact with the catalytic RNA.

Its subcellular location is the nucleus. The protein resides in the nucleolus. Component of ribonuclease P, a ribonucleoprotein complex that generates mature tRNA molecules by cleaving their 5'-ends. This is Ribonuclease P protein subunit p14 (RPP14) from Homo sapiens (Human).